Consider the following 320-residue polypeptide: Thioredoxin reductase (320 aa).

36–43 (TGMEQGGQ) is a binding site for FAD. The cysteines at positions 136 and 139 are disulfide-linked. FAD is bound at residue 287-296 (DVTDHVYRQA).

This sequence belongs to the class-II pyridine nucleotide-disulfide oxidoreductase family. In terms of assembly, homodimer. FAD is required as a cofactor.

It localises to the cytoplasm. It carries out the reaction [thioredoxin]-dithiol + NADP(+) = [thioredoxin]-disulfide + NADPH + H(+). This is Thioredoxin reductase (trxB) from Coxiella burnetii (strain RSA 493 / Nine Mile phase I).